The chain runs to 172 residues: Transcription factor E (172 aa).

In terms of domain architecture, HTH TFE/IIEalpha-type spans 8–90 (DDPVVQKYLH…LWTFQYENVP (83 aa)).

The protein belongs to the TFE family. In terms of assembly, monomer. Interaction with RNA polymerase subunits RpoF and RpoE is necessary for Tfe stimulatory transcription activity. Able to interact with Tbp and RNA polymerase in the absence of DNA promoter. Interacts both with the preinitiation and elongation complexes.

Its function is as follows. Transcription factor that plays a role in the activation of archaeal genes transcribed by RNA polymerase. Facilitates transcription initiation by enhancing TATA-box recognition by TATA-box-binding protein (Tbp), and transcription factor B (Tfb) and RNA polymerase recruitment. Not absolutely required for transcription in vitro, but particularly important in cases where Tbp or Tfb function is not optimal. It dynamically alters the nucleic acid-binding properties of RNA polymerases by stabilizing the initiation complex and destabilizing elongation complexes. Seems to translocate with the RNA polymerase following initiation and acts by binding to the non template strand of the transcription bubble in elongation complexes. This Halobacterium salinarum (strain ATCC 700922 / JCM 11081 / NRC-1) (Halobacterium halobium) protein is Transcription factor E.